Here is a 101-residue protein sequence, read N- to C-terminus: Small ribosomal subunit protein uS14 (101 aa).

It belongs to the universal ribosomal protein uS14 family. As to quaternary structure, part of the 30S ribosomal subunit. Contacts proteins S3 and S10.

In terms of biological role, binds 16S rRNA, required for the assembly of 30S particles and may also be responsible for determining the conformation of the 16S rRNA at the A site. This Gluconacetobacter diazotrophicus (strain ATCC 49037 / DSM 5601 / CCUG 37298 / CIP 103539 / LMG 7603 / PAl5) protein is Small ribosomal subunit protein uS14.